The primary structure comprises 280 residues: UPF0276 protein CC_3255 (280 aa).

The protein belongs to the UPF0276 family.

This chain is UPF0276 protein CC_3255, found in Caulobacter vibrioides (strain ATCC 19089 / CIP 103742 / CB 15) (Caulobacter crescentus).